Reading from the N-terminus, the 72-residue chain is Large ribosomal subunit protein uL29 (72 aa).

The protein belongs to the universal ribosomal protein uL29 family.

The sequence is that of Large ribosomal subunit protein uL29 from Chlamydia caviae (strain ATCC VR-813 / DSM 19441 / 03DC25 / GPIC) (Chlamydophila caviae).